The sequence spans 218 residues: UPF0301 protein RPB_4502 (218 aa).

Residues 1-26 (MVTKSKRPKSGDRSGREPGNAGPIEQ) are disordered.

It belongs to the UPF0301 (AlgH) family.

The chain is UPF0301 protein RPB_4502 from Rhodopseudomonas palustris (strain HaA2).